The following is a 389-amino-acid chain: Aromatic-amino-acid aminotransferase 2 (389 aa).

K233 carries the N6-(pyridoxal phosphate)lysine modification.

It belongs to the class-I pyridoxal-phosphate-dependent aminotransferase family. Homodimer. Requires pyridoxal 5'-phosphate as cofactor.

It carries out the reaction an aromatic L-alpha-amino acid + 2-oxoglutarate = an aromatic oxo-acid + L-glutamate. Catalyzes the transamination of phenylalanine, tyrosine and tryptophan. Shows virtually no activity towards aspartic acid, alanine, valine or isoleucine. The chain is Aromatic-amino-acid aminotransferase 2 from Thermococcus litoralis (strain ATCC 51850 / DSM 5473 / JCM 8560 / NS-C).